Here is a 419-residue protein sequence, read N- to C-terminus: UPF0761 membrane protein ACIAD3168 (419 aa).

6 helical membrane passes run 42-62 (ALTYTTLFAVVPMLTVFLVII), 105-125 (LTVIGILFLFVTTVMMLSTIE), 148-168 (WTIISLGPIILGSAFVISSTV), 186-206 (AFILWLISFGLTILGFFILYW), 212-232 (TVPMYAAIIAACFSAAIFELL), and 252-272 (AFAAIPIFLLWIFLSWNIVLL).

The protein belongs to the UPF0761 family.

The protein resides in the cell inner membrane. The polypeptide is UPF0761 membrane protein ACIAD3168 (Acinetobacter baylyi (strain ATCC 33305 / BD413 / ADP1)).